The sequence spans 164 residues: Type II secretion system protein M (164 aa).

Residues M1–Q17 are Cytoplasmic-facing. Residues L18 to P38 traverse the membrane as a helical segment. At W39–A164 the chain is on the periplasmic side.

It belongs to the GSP M family. In terms of assembly, type II secretion system is composed of four main components: the outer membrane complex, the inner membrane complex, the cytoplasmic secretion ATPase and the periplasm-spanning pseudopilus. Forms homodimers. Interacts with OutL/GspL. Interacts with OutE/GspE and OutF/GspF.

The protein localises to the cell inner membrane. Inner membrane component of the type II secretion system required for the energy-dependent secretion of extracellular factors such as proteases and toxins from the periplasm. Plays a role in the complex assembly and recruits OutL resulting in a stable complex in the inner membrane. Provides thus a link between the energy-providing OutE protein in the cytoplasm and the rest of the T2SS machinery. This chain is Type II secretion system protein M (outM), found in Pectobacterium carotovorum subsp. carotovorum (Erwinia carotovora subsp. carotovora).